Reading from the N-terminus, the 323-residue chain is MIDKYGRSIDYLRVSITDRCNLRCIYCMPPQGVTFKTHSSILRYEEIIKIVEVGTELGIKKVRITGGEPLVRQGVVNLIKELRKIPELEDITMTTNGVLLPKYAFALKRAGLSRVNISLDSLNPDTYKTITRRGEFSQAIEGIKAALEVGLNPVKINTVVMKGINDNELENFVNLTIDKDLHVRFIEYMPMGETSLLSGNYYVSLNEFKEIIIDKMGMVPVNIQNNGPSKDFKVPGAKGTVGFITAISHNFCSTCNRMRLTADGFLRPCLASDVEVNMRDEDGKISSEGVREKFEKALLLKPISHNFYKNDFFPKKNMSQIGG.

The Radical SAM core domain occupies 4 to 228; sequence KYGRSIDYLR…VPVNIQNNGP (225 aa). Arginine 13 provides a ligand contact to GTP. The [4Fe-4S] cluster site is built by cysteine 20 and cysteine 24. An S-adenosyl-L-methionine-binding site is contributed by tyrosine 26. Cysteine 27 lines the [4Fe-4S] cluster pocket. Arginine 63 is a GTP binding site. Position 67 (glycine 67) interacts with S-adenosyl-L-methionine. GTP is bound at residue threonine 94. Residue serine 118 coordinates S-adenosyl-L-methionine. Lysine 155 is a GTP binding site. Methionine 189 contacts S-adenosyl-L-methionine. Positions 252 and 255 each coordinate [4Fe-4S] cluster. 257-259 serves as a coordination point for GTP; sequence RMR. Position 269 (cysteine 269) interacts with [4Fe-4S] cluster.

It belongs to the radical SAM superfamily. MoaA family. In terms of assembly, monomer and homodimer. The cofactor is [4Fe-4S] cluster.

It carries out the reaction GTP + AH2 + S-adenosyl-L-methionine = (8S)-3',8-cyclo-7,8-dihydroguanosine 5'-triphosphate + 5'-deoxyadenosine + L-methionine + A + H(+). It participates in cofactor biosynthesis; molybdopterin biosynthesis. Functionally, catalyzes the cyclization of GTP to (8S)-3',8-cyclo-7,8-dihydroguanosine 5'-triphosphate. This chain is GTP 3',8-cyclase, found in Petrotoga mobilis (strain DSM 10674 / SJ95).